The primary structure comprises 276 residues: MKIMQSVTQLREALAGQTSVGFIPTMGFLHEGHASLLEQARQENDIVVLSIFVNPTQFGPNEDLDRYPRDEQRDQQLAQAAGVDYLFYPTNDVMYPLDMARVTVRSGDDVLCGTSRPGHFDGVLTVVSKLFNIVQPTRAYFGLKDAQQLALIEGYVTDYFVPVEIKRCPIIREADGLAKSSRNVYLSETERKQAPGIQQALQQAKQALDAGTPLETVLEQTRASLHFEGTTIDYVEAVAYPTLGPVDATTDTILLAVAVQFESARLIDNLLYTRGA.

26-33 (MGFLHEGH) contributes to the ATP binding site. Histidine 33 functions as the Proton donor in the catalytic mechanism. Glutamine 57 serves as a coordination point for (R)-pantoate. Glutamine 57 provides a ligand contact to beta-alanine. ATP is bound at residue 142–145 (GLKD). Glutamine 148 serves as a coordination point for (R)-pantoate. ATP contacts are provided by residues isoleucine 171 and 179–182 (KSSR).

It belongs to the pantothenate synthetase family. Homodimer.

Its subcellular location is the cytoplasm. It carries out the reaction (R)-pantoate + beta-alanine + ATP = (R)-pantothenate + AMP + diphosphate + H(+). It participates in cofactor biosynthesis; (R)-pantothenate biosynthesis; (R)-pantothenate from (R)-pantoate and beta-alanine: step 1/1. Functionally, catalyzes the condensation of pantoate with beta-alanine in an ATP-dependent reaction via a pantoyl-adenylate intermediate. This Exiguobacterium sibiricum (strain DSM 17290 / CCUG 55495 / CIP 109462 / JCM 13490 / 255-15) protein is Pantothenate synthetase.